The chain runs to 207 residues: MPIRKVSLLRLIPLASLVLAACTTTKPTGPATSPTSPQWRAHEQAVQQLSQYQTRGSFAYLSDQKKVYARFFWQQYSPDRYRLLLTNPLGSTELDLNVQKNVVQLTDNQGKRYVSDNAEEMIRKLTGMAIPLDNLRQWMLGLPGEASDFKLDDQYRLNSLTYQQGSQTWTVDYQDYNNSLKPQLPSRLELKQGDQRIKLKMDDWTLK.

A signal peptide spans 1 to 21; that stretch reads MPIRKVSLLRLIPLASLVLAA. A lipid anchor (N-palmitoyl cysteine) is attached at Cys-22. Cys-22 carries the S-diacylglycerol cysteine lipid modification.

This sequence belongs to the LolB family. Monomer.

It localises to the cell outer membrane. Its function is as follows. Plays a critical role in the incorporation of lipoproteins in the outer membrane after they are released by the LolA protein. This Serratia proteamaculans (strain 568) protein is Outer-membrane lipoprotein LolB.